We begin with the raw amino-acid sequence, 856 residues long: Cyclic di-GMP phosphodiesterase PdeB (856 aa).

2 helical membrane-spanning segments follow: residues Ile7–Gly27 and Trp230–Leu250. A PAS domain is found at Gln303 to Leu350. The GGDEF domain maps to Arg454–Asp587. Positions Ala598 to Leu852 constitute an EAL domain.

The protein resides in the cell membrane. It catalyses the reaction 3',3'-c-di-GMP + H2O = 5'-phosphoguanylyl(3'-&gt;5')guanosine + H(+). Functionally, affects motility and biofilm formation, and is linked to the regulation of sulfate uptake and assimilation. This chain is Cyclic di-GMP phosphodiesterase PdeB (pdeB), found in Shewanella oneidensis (strain ATCC 700550 / JCM 31522 / CIP 106686 / LMG 19005 / NCIMB 14063 / MR-1).